Consider the following 882-residue polypeptide: Ubiquitin carboxyl-terminal hydrolase 4 (882 aa).

The 127-residue stretch at 182-308 (YDSSLLLIDV…WVSKKGACET (127 aa)) folds into the Rhodanese domain. Residues 382 to 399 (KAKSSSTSSVTSSSPAPS) are compositionally biased toward low complexity. Residues 382 to 411 (KAKSSSTSSVTSSSPAPSQLVRPQTSSMPP) are disordered. Residues 402-411 (VRPQTSSMPP) are compositionally biased toward polar residues. The 361-residue stretch at 519-879 (VGLENMGNSC…NAYVLFYHRV (361 aa)) folds into the USP domain. Cysteine 528 functions as the Nucleophile in the catalytic mechanism. Residue histidine 836 is the Proton acceptor of the active site.

Belongs to the peptidase C19 family.

It localises to the cytoplasm. Its subcellular location is the late endosome membrane. It catalyses the reaction Thiol-dependent hydrolysis of ester, thioester, amide, peptide and isopeptide bonds formed by the C-terminal Gly of ubiquitin (a 76-residue protein attached to proteins as an intracellular targeting signal).. Its activity is regulated as follows. RFU1 is an inhibitor of deubiquitination activity. Its function is as follows. Ubiquitin thioesterase that acts at the late endosome/prevacuolar compartment to recover ubiquitin from ubiquitinated membrane proteins en route to the vacuole. Also removes ubiquitin from soluble proteins targeted to proteasomes. Is essential to maintain a normal level of free ubiquitin. Required for promoting coordination of DNA replication and avoids DNA overreplication. The polypeptide is Ubiquitin carboxyl-terminal hydrolase 4 (DOA4) (Vanderwaltozyma polyspora (strain ATCC 22028 / DSM 70294 / BCRC 21397 / CBS 2163 / NBRC 10782 / NRRL Y-8283 / UCD 57-17) (Kluyveromyces polysporus)).